A 456-amino-acid polypeptide reads, in one-letter code: Cysteine--tRNA ligase (456 aa).

Cysteine 28 is a Zn(2+) binding site. Residues isoleucine 30 to histidine 40 carry the 'HIGH' region motif. Cysteine 209, histidine 234, and glutamate 238 together coordinate Zn(2+). The short motif at lysine 266–serine 270 is the 'KMSKS' region element. An ATP-binding site is contributed by lysine 269.

Belongs to the class-I aminoacyl-tRNA synthetase family. In terms of assembly, monomer. The cofactor is Zn(2+).

Its subcellular location is the cytoplasm. The catalysed reaction is tRNA(Cys) + L-cysteine + ATP = L-cysteinyl-tRNA(Cys) + AMP + diphosphate. The sequence is that of Cysteine--tRNA ligase from Legionella pneumophila (strain Paris).